The sequence spans 1181 residues: Poly [ADP-ribose] polymerase tankyrase (1181 aa).

18 ANK repeats span residues 56-85, 89-118, 122-151, 209-238, 242-271, 275-304, 362-394, 398-427, 431-458, 483-513, 519-548, 552-581, 585-614, 638-668, 672-701, 705-734, 738-767, and 771-799; these read RKST…SIQA, GGLH…SPNT, WNYT…NHTI, RRST…DVHA, GGLV…NVNA, WAFT…DPTL, TGDT…LLNE, AFLT…KVNA, LGQT…DTNI, DSET…SVNC, RHST…EVYA, GGLV…NVNV, WKFT…DPMK, RGPS…NCRD, RNST…DVNA, GGLI…VVNA, WGFT…DAYM, and EGQT…LSQQ. 2 disordered regions span residues 807 to 834 and 864 to 886; these read SLTS…SAIL and RISP…DLLP. In terms of domain architecture, SAM spans 889–952; sequence DTITNVSGFL…LKGIAQLRST (64 aa). Residues 969-1174 form the PARP catalytic domain; the sequence is LPDDKEFVAV…YQIVKPDDSS (206 aa). Zn(2+) contacts are provided by cysteine 1091, histidine 1094, cysteine 1099, and cysteine 1102.

It belongs to the ARTD/PARP family. In terms of assembly, interacts (via ANK repeats) with PI31.

It catalyses the reaction NAD(+) + (ADP-D-ribosyl)n-acceptor = nicotinamide + (ADP-D-ribosyl)n+1-acceptor + H(+).. The enzyme catalyses L-aspartyl-[protein] + NAD(+) = 4-O-(ADP-D-ribosyl)-L-aspartyl-[protein] + nicotinamide. The catalysed reaction is L-glutamyl-[protein] + NAD(+) = 5-O-(ADP-D-ribosyl)-L-glutamyl-[protein] + nicotinamide. Its function is as follows. Stimulates proteasome activity, probably by ADP-ribosylation of PI31. Modulates 26S proteasome assembly. This is Poly [ADP-ribose] polymerase tankyrase from Drosophila melanogaster (Fruit fly).